Reading from the N-terminus, the 459-residue chain is Interleukin-7 receptor subunit alpha (459 aa).

Positions 1-20 (MMALGRAFAIVFCLIQAVSG) are cleaved as a signal peptide. Topologically, residues 21 to 239 (ESGNAQDGDL…PEPKNQGGWD (219 aa)) are extracellular. Cys42 and Cys57 are disulfide-bonded. Asn60 carries N-linked (GlcNAc...) asparagine glycosylation. Disulfide bonds link Cys74–Cys82 and Cys108–Cys118. Residues Asn115 and Asn177 are each glycosylated (N-linked (GlcNAc...) asparagine). The region spanning 131-232 (APSDLKVVYR…PSSTFETPEP (102 aa)) is the Fibronectin type-III domain. Residues 218–222 (WSEWS) carry the WSXWS motif motif. Residues 240–264 (PVLPSVTILSLFSVFLLVILAHVLW) traverse the membrane as a helical segment. Residues 265 to 459 (KKRIKPVVWP…VTMSSFYQNK (195 aa)) are Cytoplasmic-facing. Residues 272–280 (VWPSLPDHK) carry the Box 1 motif motif. Phosphothreonine; by PKC is present on Thr282. 2 disordered regions span residues 337–365 (TQGH…RRES) and 378–413 (NAPP…NTNV). Positions 347–357 (ANRSPETSVSP) are enriched in polar residues. Residues 388-397 (PDYRDGDRNR) show a composition bias toward basic and acidic residues.

This sequence belongs to the type I cytokine receptor family. Type 4 subfamily. In terms of assembly, the IL7 receptor is a heterodimer of IL7R and IL2RG. The TSLP receptor is a heterodimer of CRLF2 and IL7R. Interacts with CD53. N-glycosylated IL-7Ralpha binds IL7 300-fold more tightly than the unglycosylated form. Post-translationally, ubiquitinated by MARCHF8; leading to lysosomal degradation. In terms of tissue distribution, spleen, thymus and fetal liver.

It is found in the membrane. Its function is as follows. Receptor for interleukin-7. Also acts as a receptor for thymic stromal lymphopoietin (TSLP). This is Interleukin-7 receptor subunit alpha (Il7r) from Mus musculus (Mouse).